We begin with the raw amino-acid sequence, 749 residues long: EF-hand domain-containing family member C2 (749 aa).

3 consecutive DM10 domains span residues 75 to 182, 226 to 368, and 431 to 538; these read DKQV…RKIG, HGKI…KSKY, and KSNI…EQNT. The EF-hand domain maps to 558–593; sequence GKSRELKQVFKAADSKHTNMVDYNTFRDILMSLTVG.

As to quaternary structure, microtubule inner protein component of sperm flagellar doublet microtubules. As to expression, expressed in airway epithelial cells.

It is found in the cytoplasm. The protein localises to the cytoskeleton. It localises to the cilium axoneme. The protein resides in the flagellum axoneme. Functionally, microtubule inner protein (MIP) part of the dynein-decorated doublet microtubules (DMTs) in cilia axoneme, which is required for motile cilia beating. This is EF-hand domain-containing family member C2 from Homo sapiens (Human).